The chain runs to 620 residues: 1-deoxy-D-xylulose-5-phosphate synthase (620 aa).

Thiamine diphosphate contacts are provided by residues H80 and G121–S123. D152 lines the Mg(2+) pocket. Thiamine diphosphate-binding positions include G153–A154, N181, Y288, and E370. Position 181 (N181) interacts with Mg(2+).

This sequence belongs to the transketolase family. DXPS subfamily. As to quaternary structure, homodimer. Mg(2+) serves as cofactor. Thiamine diphosphate is required as a cofactor.

It carries out the reaction D-glyceraldehyde 3-phosphate + pyruvate + H(+) = 1-deoxy-D-xylulose 5-phosphate + CO2. The protein operates within metabolic intermediate biosynthesis; 1-deoxy-D-xylulose 5-phosphate biosynthesis; 1-deoxy-D-xylulose 5-phosphate from D-glyceraldehyde 3-phosphate and pyruvate: step 1/1. Catalyzes the acyloin condensation reaction between C atoms 2 and 3 of pyruvate and glyceraldehyde 3-phosphate to yield 1-deoxy-D-xylulose-5-phosphate (DXP). In Salmonella paratyphi A (strain ATCC 9150 / SARB42), this protein is 1-deoxy-D-xylulose-5-phosphate synthase.